Reading from the N-terminus, the 282-residue chain is Nucleotide-binding protein XAC2976 (282 aa).

5–12 (GLSGSGKS) is a binding site for ATP. Residue 57–60 (DVRS) coordinates GTP.

It belongs to the RapZ-like family.

Functionally, displays ATPase and GTPase activities. The protein is Nucleotide-binding protein XAC2976 of Xanthomonas axonopodis pv. citri (strain 306).